The sequence spans 34 residues: Papillosin (34 aa).

Functionally, has strong antibacterial activity against the Gram-positive bacteria M.luteus, S.aureus, B.megaterium, A.viridans and E.faecalis, and against the Gram-negative bacteria K.pneumoniae, E.coli DH5alpha, S.typhimurium, P.aeruginosa and E.aerogenes. Lacks hemolytic activity against sheep erythrocytes. The sequence is that of Papillosin from Halocynthia papillosa (Red sea-squirt).